Here is a 706-residue protein sequence, read N- to C-terminus: uncharacterized protein (706 aa).

This is an uncharacterized protein from Rickettsia prowazekii (strain Madrid E).